The chain runs to 61 residues: Bowman-Birk type proteinase inhibitor (61 aa).

7 disulfides stabilise this stretch: Cys-4/Cys-57, Cys-5/Cys-20, Cys-8/Cys-53, Cys-10/Cys-18, Cys-27/Cys-34, Cys-31/Cys-46, and Cys-36/Cys-44.

This sequence belongs to the Bowman-Birk serine protease inhibitor family.

Its function is as follows. Strong inhibitor of trypsin with a 1:1 stoichiometry. Weaker inhibitor of chymotrypsin. The sequence is that of Bowman-Birk type proteinase inhibitor from Erythrina variegata (Indian coral tree).